Consider the following 300-residue polypeptide: Ribosomal RNA small subunit methyltransferase H (300 aa).

S-adenosyl-L-methionine-binding positions include 35–37 (GGH), D55, F82, D100, and Q107.

Belongs to the methyltransferase superfamily. RsmH family.

Its subcellular location is the cytoplasm. The catalysed reaction is cytidine(1402) in 16S rRNA + S-adenosyl-L-methionine = N(4)-methylcytidine(1402) in 16S rRNA + S-adenosyl-L-homocysteine + H(+). In terms of biological role, specifically methylates the N4 position of cytidine in position 1402 (C1402) of 16S rRNA. This Chlamydia trachomatis serovar A (strain ATCC VR-571B / DSM 19440 / HAR-13) protein is Ribosomal RNA small subunit methyltransferase H.